A 103-amino-acid polypeptide reads, in one-letter code: Large ribosomal subunit protein bL21 (103 aa).

Belongs to the bacterial ribosomal protein bL21 family. Part of the 50S ribosomal subunit. Contacts protein L20.

In terms of biological role, this protein binds to 23S rRNA in the presence of protein L20. The sequence is that of Large ribosomal subunit protein bL21 from Vibrio atlanticus (strain LGP32) (Vibrio splendidus (strain Mel32)).